Reading from the N-terminus, the 274-residue chain is 2-dehydro-3-deoxyphosphooctonate aldolase (274 aa).

It belongs to the KdsA family.

It localises to the cytoplasm. The catalysed reaction is D-arabinose 5-phosphate + phosphoenolpyruvate + H2O = 3-deoxy-alpha-D-manno-2-octulosonate-8-phosphate + phosphate. The protein operates within carbohydrate biosynthesis; 3-deoxy-D-manno-octulosonate biosynthesis; 3-deoxy-D-manno-octulosonate from D-ribulose 5-phosphate: step 2/3. Its pathway is bacterial outer membrane biogenesis; lipopolysaccharide biosynthesis. In Legionella pneumophila (strain Lens), this protein is 2-dehydro-3-deoxyphosphooctonate aldolase.